A 371-amino-acid chain; its full sequence is Leu/Ile/Val-binding protein homolog 1 (371 aa).

Residues 1 to 23 (MRKTLFSGVALAAVIAFGGSAWA) form the signal peptide.

This sequence belongs to the leucine-binding protein family.

Its function is as follows. Component of an amino-acid transport system. This is Leu/Ile/Val-binding protein homolog 1 from Brucella abortus (strain 2308).